A 255-amino-acid chain; its full sequence is Shieldin complex subunit 3 (255 aa).

Residues 33-88 (QDFPTHPLPRFIPWFPYDESKLPLKPERLPPVISEEAAESVKQYLAISEPGVKSQS) form a sufficient for interaction with MAD2L2 region. The interval 116-135 (QTNAAHLDKNSGKEKQHKQR) is disordered.

As to quaternary structure, component of the shieldin complex, consisting of SHLD1, SHLD2, SHLD3 and MAD2L2/REV7. Within the complex, SHLD2 forms a scaffold which interacts with a SHLD3-MAD2L2 subcomplex via its N-terminus, and with SHLD1 via its C-terminus. Interacts with ASTE1.

It localises to the chromosome. Component of the shieldin complex, which plays an important role in repair of DNA double-stranded breaks (DSBs). During G1 and S phase of the cell cycle, the complex functions downstream of TP53BP1 to promote non-homologous end joining (NHEJ) and suppress DNA end resection. Mediates various NHEJ-dependent processes including immunoglobulin class-switch recombination, and fusion of unprotected telomeres. This is Shieldin complex subunit 3 from Mus musculus (Mouse).